We begin with the raw amino-acid sequence, 154 residues long: Transcription antitermination protein NusB (154 aa).

Belongs to the NusB family.

In terms of biological role, involved in transcription antitermination. Required for transcription of ribosomal RNA (rRNA) genes. Binds specifically to the boxA antiterminator sequence of the ribosomal RNA (rrn) operons. This chain is Transcription antitermination protein NusB, found in Rickettsia typhi (strain ATCC VR-144 / Wilmington).